Reading from the N-terminus, the 505-residue chain is Probable inorganic carbon transporter subunit DabB (505 aa).

A run of 13 helical transmembrane segments spans residues Ser9–Leu29, Phe37–Ala57, Trp68–Ile88, Tyr105–Gly123, Leu162–Gly182, Thr204–Gln224, Ile231–Ile251, Leu259–Ile279, Gly303–Leu323, Leu355–Ala375, Leu382–Phe402, Ile410–Phe430, and Met446–Val466.

Belongs to the inorganic carbon transporter (TC 9.A.2) DabB family. As to quaternary structure, forms a complex with DabA.

It localises to the cell membrane. In terms of biological role, part of an energy-coupled inorganic carbon pump. In Bacillus subtilis (strain 168), this protein is Probable inorganic carbon transporter subunit DabB.